Reading from the N-terminus, the 213-residue chain is Ras-like protein rasU (213 aa).

21–28 (GDGGVGKT) is a GTP binding site. Positions 43–51 (YDPTIEDLY) match the Effector region motif. GTP-binding positions include 68-72 (DTAGQ) and 126-129 (NKSD). Cysteine 210 carries the post-translational modification Cysteine methyl ester. Cysteine 210 carries S-geranylgeranyl cysteine lipidation. Residues 211 to 213 (KMI) constitute a propeptide, removed in mature form.

This sequence belongs to the small GTPase superfamily. Ras family.

Its subcellular location is the cell membrane. It carries out the reaction GTP + H2O = GDP + phosphate + H(+). Functionally, ras proteins bind GDP/GTP and possess intrinsic GTPase activity. This Dictyostelium discoideum (Social amoeba) protein is Ras-like protein rasU (rasU).